The sequence spans 221 residues: Glutathione S-transferase (221 aa).

Positions Gly-3 to Gly-83 constitute a GST N-terminal domain. Glutathione contacts are provided by residues Tyr-9, Lys-45, Gln-54–Val-55, and Gln-67–Thr-68. The 124-residue stretch at Asp-85 to Leu-208 folds into the GST C-terminal domain.

It belongs to the GST superfamily. Alpha family. Homodimer or heterodimer of GSTA1 and GSTA2.

It catalyses the reaction RX + glutathione = an S-substituted glutathione + a halide anion + H(+). The catalysed reaction is prostaglandin A2 + glutathione = prostaglandin A2-S-(R)-glutathione. The enzyme catalyses prostaglandin J2 + glutathione = prostaglandin J2-S-(R)-glutathione. It carries out the reaction (13S)-hydroperoxy-(9Z,11E)-octadecadienoate + 2 glutathione = (13S)-hydroxy-(9Z,11E)-octadecadienoate + glutathione disulfide + H2O. It catalyses the reaction androst-5-ene-3,17-dione = androst-4-ene-3,17-dione. In terms of biological role, glutathione S-transferase that catalyzes the nucleophilic attack of the sulfur atom of glutathione on the electrophilic groups of a wide range of exogenous and endogenous compounds. Involved in the formation of glutathione conjugates of both prostaglandin A2 (PGA2) and prostaglandin J2 (PGJ2). It also catalyzes the isomerization of D5-androstene-3,17-dione (AD) into D4-androstene-3,17-dione and may therefore play an important role in hormone biosynthesis. Through its glutathione-dependent peroxidase activity toward the fatty acid hydroperoxide (13S)-hydroperoxy-(9Z,11E)-octadecadienoate/13-HPODE it is also involved in the metabolism of oxidized linoleic acid. This Gallus gallus (Chicken) protein is Glutathione S-transferase.